Here is a 370-residue protein sequence, read N- to C-terminus: Metallophosphoesterase 1 homolog (370 aa).

Residues 7-27 (CFVIVLCALIFCEYVADFVVL) form a helical membrane-spanning segment. A divalent metal cation is bound by residues Asp52, Asp94, Asn132, His225, His275, and His277. Residues 328–348 (FVFNSYLSAGILCLIVIGFQL) form a helical membrane-spanning segment.

Belongs to the metallophosphoesterase superfamily. MPPE1 family. Mn(2+) serves as cofactor.

It localises to the membrane. Its function is as follows. Metallophosphoesterase. The polypeptide is Metallophosphoesterase 1 homolog (PGAP5) (Drosophila melanogaster (Fruit fly)).